A 496-amino-acid chain; its full sequence is Cobyric acid synthase (496 aa).

In terms of domain architecture, GATase cobBQ-type spans 252-442 (DLAVAVIRLP…LHGCFDSDTY (191 aa)). Cys333 acts as the Nucleophile in catalysis. Residue His434 is part of the active site.

It belongs to the CobB/CobQ family. CobQ subfamily.

The protein operates within cofactor biosynthesis; adenosylcobalamin biosynthesis. Functionally, catalyzes amidations at positions B, D, E, and G on adenosylcobyrinic A,C-diamide. NH(2) groups are provided by glutamine, and one molecule of ATP is hydrogenolyzed for each amidation. The sequence is that of Cobyric acid synthase from Desulforudis audaxviator (strain MP104C).